The following is a 339-amino-acid chain: 2-deoxy-scyllo-inosamine dehydrogenase (339 aa).

Residues Cys-37, His-59, Cys-88, Cys-91, Cys-94, Cys-102, and Glu-143 each contribute to the Zn(2+) site.

This sequence belongs to the zinc-containing alcohol dehydrogenase family. DOIA dehydrogenase subfamily. Requires Zn(2+) as cofactor.

The enzyme catalyses 2-deoxy-scyllo-inosamine + NADP(+) = 3-amino-2,3-dideoxy-scyllo-inosose + NADPH + H(+). It catalyses the reaction 2-deoxy-scyllo-inosamine + NAD(+) = 3-amino-2,3-dideoxy-scyllo-inosose + NADH + H(+). The protein operates within metabolic intermediate biosynthesis; 2-deoxystreptamine biosynthesis; 2-deoxystreptamine from D-glucose 6-phosphate: step 3/4. It functions in the pathway antibiotic biosynthesis; paromomycin biosynthesis. Functionally, catalyzes the oxidation of 2-deoxy-scyllo-inosamine (DOIA) with NAD(+) or NADP(+), forming 3-amino-2,3-dideoxy-scyllo-inosose (amino-DOI). This Streptomyces paromomycinus (Streptomyces rimosus subsp. paromomycinus) protein is 2-deoxy-scyllo-inosamine dehydrogenase (parE).